We begin with the raw amino-acid sequence, 330 residues long: Lymphocyte-specific protein 1 (330 aa).

Composition is skewed to basic and acidic residues over residues 1–20 (MAEA…HAED) and 37–62 (AREQ…DGGH). Disordered stretches follow at residues 1-246 (MAEA…SIEL) and 281-302 (DMSK…TIKS). A compositionally biased stretch (polar residues) spans 66–77 (QPGQQTLISLKS). A phosphoserine; by CK2 mark is found at Ser-77 and Ser-78. The segment covering 113–135 (QSERPEEKQTEESSHQAKVHLEE) has biased composition (basic and acidic residues). Thr-166 is modified (phosphothreonine). 4 positions are modified to phosphoserine: Ser-168, Ser-179, Ser-180, and Ser-184. Polar residues-rich tracts occupy residues 206 to 215 (VKKSQPTLPI) and 223 to 242 (QQYT…SRQP). Ser-243 bears the Phosphoserine; by MAPKAPK2 mark. Residues 291–302 (KGGSKISSTIKS) show a composition bias toward low complexity. N6-acetyllysine is present on Lys-318.

Post-translationally, phosphorylated by casein kinase II, protein kinase C and MAPKAPK2. Phosphorylation by PKC induces translocation from membrane to cytoplasm. Phosphorylation by MAPKAPK2 may regulate neutrophil chemotaxis. Isoform 1 is expressed in normal mouse B and T-lymphocytes and in transformed B-cells but not (or in smaller amounts) in nine T-lymphoma lines tested. Isoform 2 is expressed in non-lymphoid cell lines (myocytes, stromal cells, fibroblasts).

Its subcellular location is the cell membrane. May play a role in mediating neutrophil activation and chemotaxis. This chain is Lymphocyte-specific protein 1 (Lsp1), found in Mus musculus (Mouse).